The chain runs to 377 residues: SH2/SH3 adapter protein Nck1 (377 aa).

Residue Ala2 is modified to N-acetylalanine. Residues 2 to 61 (AEEVVVVAKFDYVAQQEQELDIKKNERLWLLDDSKSWWRVRNSMNKTGFVPSNYVERKNS) form the SH3 1 domain. Phosphoserine occurs at positions 85, 91, and 96. Residue Tyr105 is modified to Phosphotyrosine. Residues 106–165 (DLNMPAFVKFNYMAEREDELSLIKGTKVIVMEKCSDGWWRGSYNGQIGWFPSNYVTEEGD) form the SH3 2 domain. Position 166 is a phosphoserine (Ser166). Residues 190-252 (QVLHVVQALY…PKNYVTIMQN (63 aa)) enclose the SH3 3 domain. Residues 282 to 376 (WYYGKVTRHQ…GEKLYLVKHL (95 aa)) enclose the SH2 domain.

In terms of assembly, interacts (via SH2 domain and SH3 domain 2) with EGFR. Interacts with PAK1 and SOS1. Interacts (via SH3 domains) with PKN2. Associates with BLNK, PLCG1, VAV1 and NCK1 in a B-cell antigen receptor-dependent fashion. Interacts with SOCS7. This interaction is required for nuclear import. Part of a complex containing PPP1R15B, PP1 and NCK1. Interacts with RALGPS1. Interacts with CAV2 (tyrosine phosphorylated form). Interacts with ADAM15. Interacts with FASLG. Directly interacts with RASA1. Interacts with isoform 4 of MINK1. Interacts with FLT1 (tyrosine phosphorylated). Interacts with KDR (tyrosine phosphorylated). Interacts (via SH2 domain) with EPHB1; activates the JUN cascade to regulate cell adhesion. Interacts with EPHA2. Interacts (via SH2 domain) with PDGFRB (tyrosine phosphorylated). Interacts with the inactive form of EIF2AK2/PKR. Interacts with PTPN1. Interacts with INSR/insulin receptor (in response to insulin stimulation); this interaction may mediate PTPN1 recruitment leading to INSR dephosphorylation. Interacts with CD3E (via Proline-rich sequence); the interaction is ligand dependent but independent of tyrosine kinase activation. Interacts with EGFR. Interacts with IRS1. In terms of processing, phosphorylated on Ser and Tyr residues. Phosphorylated in response to activation of EGFR and FcERI. Phosphorylated by activated PDGFRB.

It localises to the cytoplasm. It is found in the endoplasmic reticulum. The protein resides in the nucleus. Functionally, adapter protein which associates with tyrosine-phosphorylated growth factor receptors, such as KDR and PDGFRB, or their cellular substrates. Maintains low levels of EIF2S1 phosphorylation by promoting its dephosphorylation by PP1. Plays a role in the DNA damage response, not in the detection of the damage by ATM/ATR, but for efficient activation of downstream effectors, such as that of CHEK2. Plays a role in ELK1-dependent transcriptional activation in response to activated Ras signaling. Modulates the activation of EIF2AK2/PKR by dsRNA. May play a role in cell adhesion and migration through interaction with ephrin receptors. Also acts as an adpater protein for the T cell receptor complex (TCR-CD3E). Upon ligand engagement, is recruited by CD3E and promotes maturation of the immune synapse and T cell activation. In Mus musculus (Mouse), this protein is SH2/SH3 adapter protein Nck1 (Nck1).